The following is a 560-amino-acid chain: MVWALTPVDTVRGAQRCYIFAAGTYKVGRKDCDVIVQTDTSISRVHAEIVVEKMVAWDPQSGAPANPSYVRVVDRSKYGTFFNKVQGTQGSRLHKDEDAMLADGDTVTFGTGSATFRLSFVPIVVFFHGKKSGRISPSLQAVMTSIGAYATRKWSDECTHVLVDESCSLTPELLDAVLAKKQIVLGDWFKVMAEKNIHTAMPSSTQYIPKLTLDGMEIQVVEIKLIESCLAGYTFILGSSEKYKFGDKLHALLESTGAKYLHVDEFCANSQDSGAGENDKDILLVPAKSPLEFSKISGLFPLSKITDVKLFAAILSGHLEATAIEPPAYIVASSNSTDETIVVDSDVEIDTATSDHTVAASKSEHHIEHISDDKKEVVAISEEDAVNLVEAKTSINLHSYQEKDEIVKPMEEDVKVIEKTATMRGFKVEGEDIPVMTKVPKDETLDSRDETCHVIYTQNLVVKSILQSARAESIETGGINFKRFRKRGAVSGNSFKDLIPYSREPYRESDYKRGTVIDFMREEKKRRQMEAIAEDLFNNAKPKKKAAAGSSIHTMLTGRR.

Positions tyrosine 25–glycine 87 constitute an FHA domain. Positions threonine 115–lysine 190 constitute a BRCT domain. A Nuclear localization signal motif is present at residues tyrosine 511–aspartate 518.

The protein belongs to the Nibrin family. Component of the MRN complex composed of two heterodimers RAD50 and MRE11 associated with a single NBS1.

The protein resides in the nucleus. Its subcellular location is the chromosome. Functionally, component of the MRN complex, which plays a central role in double-strand break (DSB) repair, DNA recombination, maintenance of telomere integrity and meiosis. The MRN complex is involved in the repair of DNA double-strand breaks (DSBs) via homologous recombination (HR), an error-free mechanism which primarily occurs during S and G2 phases. The complex (1) mediates the end resection of damaged DNA, which generates proper single-stranded DNA, a key initial steps in HR, and is (2) required for the recruitment of other repair factors and efficient activation of ATM and ATR upon DNA damage. The MRN complex possesses single-strand endonuclease activity and double-strand-specific 3'-5' exonuclease activity, which are provided by MRE11, to initiate end resection, which is required for single-strand invasion and recombination. Within the MRN complex, NBS1 acts as a protein-protein adapter, which specifically recognizes and binds phosphorylated proteins, promoting their recruitment to DNA damage sites. Recruits MRE11 and RAD50 components of the MRN complex to DSBs in response to DNA damage. The polypeptide is Nibrin homolog (Oryza sativa subsp. indica (Rice)).